The primary structure comprises 55 residues: Large ribosomal subunit protein bL33 (55 aa).

Belongs to the bacterial ribosomal protein bL33 family.

This is Large ribosomal subunit protein bL33 from Bartonella quintana (strain Toulouse) (Rochalimaea quintana).